Here is a 77-residue protein sequence, read N- to C-terminus: UPF0270 protein Spro_4577 (77 aa).

It belongs to the UPF0270 family.

The chain is UPF0270 protein Spro_4577 from Serratia proteamaculans (strain 568).